The sequence spans 291 residues: Protein ZAR1-like (291 aa).

The segment at 103-152 (GSQTLHSSSLSDRTSSRKPTEAWEVGRRALIRRPQDGEDEESQEELTGPT) is disordered. Residues 106 to 115 (TLHSSSLSDR) are compositionally biased toward low complexity. Residues 116–129 (TSSRKPTEAWEVGR) are compositionally biased toward basic and acidic residues. The segment at 195 to 280 (LKYGYFHCKD…QELCGHCKDK (86 aa)) adopts a 3CxxC-type zinc-finger fold.

Belongs to the ZAR1 family. Interacts with YBX2. Expressed in oocytes and zygotes. Predominantly expressed in maturing oocytes before maternal-to-zygotic transition (MZT). Less abundant than Zar1.

The protein resides in the cytoplasm. It is found in the cytoplasmic ribonucleoprotein granule. MRNA-binding protein required for maternal mRNA storage, translation and degradation during oocyte maturation. Probably promotes formation of some phase-separated membraneless compartment that stores maternal mRNAs in oocytes: acts by undergoing liquid-liquid phase separation upon binding to maternal mRNAs. Binds to the 3'-UTR of maternal mRNAs, inhibiting their translation. This is Protein ZAR1-like from Mus musculus (Mouse).